Consider the following 118-residue polypeptide: Ribulose bisphosphate carboxylase small subunit (118 aa).

The protein belongs to the RuBisCO small chain family. Heterohexadecamer of 8 large and 8 small subunits.

RuBisCO catalyzes two reactions: the carboxylation of D-ribulose 1,5-bisphosphate, the primary event in carbon dioxide fixation, as well as the oxidative fragmentation of the pentose substrate. Both reactions occur simultaneously and in competition at the same active site. Although the small subunit is not catalytic it is essential for maximal activity. In Rhodobacter capsulatus (Rhodopseudomonas capsulata), this protein is Ribulose bisphosphate carboxylase small subunit.